We begin with the raw amino-acid sequence, 288 residues long: Thiamine-monophosphate kinase (288 aa).

Mg(2+) contacts are provided by Asp20, Thr30, and Asp32. Position 39 (Asp39) interacts with substrate. Residues Asp60 and Asp107 each contribute to the Mg(2+) site. ATP contacts are provided by residues 106–107 and Arg130; that span reads GD. Position 188 (Asp188) interacts with Mg(2+). Ser190 is a binding site for ATP. Asp191 provides a ligand contact to Mg(2+). Residue Trp286 participates in substrate binding.

This sequence belongs to the thiamine-monophosphate kinase family.

The enzyme catalyses thiamine phosphate + ATP = thiamine diphosphate + ADP. It functions in the pathway cofactor biosynthesis; thiamine diphosphate biosynthesis; thiamine diphosphate from thiamine phosphate: step 1/1. Catalyzes the ATP-dependent phosphorylation of thiamine-monophosphate (TMP) to form thiamine-pyrophosphate (TPP), the active form of vitamin B1. In Halobacterium salinarum (strain ATCC 700922 / JCM 11081 / NRC-1) (Halobacterium halobium), this protein is Thiamine-monophosphate kinase.